The chain runs to 171 residues: Transcription factor E (171 aa).

The HTH TFE/IIEalpha-type domain occupies 5–91 (DNKAVRGYIQ…LWKLDLDNSV (87 aa)).

Belongs to the TFE family. Monomer. Interaction with RNA polymerase subunits RpoF and RpoE is necessary for Tfe stimulatory transcription activity. Able to interact with Tbp and RNA polymerase in the absence of DNA promoter. Interacts both with the preinitiation and elongation complexes.

Its function is as follows. Transcription factor that plays a role in the activation of archaeal genes transcribed by RNA polymerase. Facilitates transcription initiation by enhancing TATA-box recognition by TATA-box-binding protein (Tbp), and transcription factor B (Tfb) and RNA polymerase recruitment. Not absolutely required for transcription in vitro, but particularly important in cases where Tbp or Tfb function is not optimal. It dynamically alters the nucleic acid-binding properties of RNA polymerases by stabilizing the initiation complex and destabilizing elongation complexes. Seems to translocate with the RNA polymerase following initiation and acts by binding to the non template strand of the transcription bubble in elongation complexes. This chain is Transcription factor E, found in Methanocella arvoryzae (strain DSM 22066 / NBRC 105507 / MRE50).